The chain runs to 549 residues: SET and MYND domain-containing protein DDB_G0277331 (549 aa).

The 257-residue stretch at 27-283 (KGIELRYCDG…KDEELFINYS (257 aa)) folds into the SET domain. Zn(2+) contacts are provided by Cys71, Cys74, Cys90, Cys93, Cys99, Cys103, His111, and Cys115. The segment at 71–115 (CDECLKNKLDLEEGKTLKRCSNCKLVYYCSTDCQTKAWKIHKQEC) adopts an MYND-type zinc-finger fold. Residues 340-401 (NINNNNNNNN…IIKNLQNKLS (62 aa)) are a coiled coil.

The protein belongs to the class V-like SAM-binding methyltransferase superfamily.

Functionally, probable methyltransferase. The polypeptide is SET and MYND domain-containing protein DDB_G0277331 (Dictyostelium discoideum (Social amoeba)).